A 309-amino-acid chain; its full sequence is Ribosomal RNA small subunit methyltransferase H (309 aa).

S-adenosyl-L-methionine-binding positions include 39–41 (GGH), aspartate 59, phenylalanine 83, aspartate 100, and glutamine 107.

It belongs to the methyltransferase superfamily. RsmH family.

The protein resides in the cytoplasm. The catalysed reaction is cytidine(1402) in 16S rRNA + S-adenosyl-L-methionine = N(4)-methylcytidine(1402) in 16S rRNA + S-adenosyl-L-homocysteine + H(+). In terms of biological role, specifically methylates the N4 position of cytidine in position 1402 (C1402) of 16S rRNA. This Delftia acidovorans (strain DSM 14801 / SPH-1) protein is Ribosomal RNA small subunit methyltransferase H.